The sequence spans 1939 residues: Myosin-1 (1939 aa).

One can recognise a Myosin N-terminal SH3-like domain in the interval 33 to 82; the sequence is DAKTSVFVAEPKESFVKGTVQSREGGKVTVKTEAGATLTVKEDQVFPMNP. Threonine 64 and threonine 69 each carry phosphothreonine. Residues 86–782 form the Myosin motor domain; it reads DKIEDMAMMT…LLGLLEEMRD (697 aa). The residue at position 130 (lysine 130) is an N6,N6,N6-trimethyllysine. Residue 179-186 coordinates ATP; that stretch reads GESGAGKT. Position 389 is a phosphotyrosine (tyrosine 389). A Phosphoserine modification is found at serine 392. Threonine 419 carries the post-translational modification Phosphothreonine. Tyrosine 424 carries the phosphotyrosine modification. Serine 625 is subject to Phosphoserine. An actin-binding region spans residues 659–681; sequence LNKLMTNLRSTHPHFVRCIIPNE. Histidine 757 is subject to Pros-methylhistidine. An actin-binding region spans residues 761-775; the sequence is KFGHTKVFFKAGLLG. Positions 785–814 constitute an IQ domain; that stretch reads LAQLITRTQARCRGFLARVEYQKMVERRES. A coiled-coil region spans residues 843–1939; that stretch reads LLKSAETEKE…EVHTKIISEE (1097 aa). Phosphoserine is present on residues serine 1092 and serine 1096. 2 disordered regions span residues 1125–1147 and 1153–1172; these read EIEAERASRAKAEKQRSDLSREL and RLEEAGGATSAQIEMNKKRE. Positions 1128-1147 are enriched in basic and acidic residues; that stretch reads AERASRAKAEKQRSDLSREL. Residues serine 1162 and serine 1237 each carry the phosphoserine modification. Threonine 1241 is subject to Phosphothreonine. Serine 1243 carries the post-translational modification Phosphoserine. Threonine 1255 carries the post-translational modification Phosphothreonine. Residue serine 1261 is modified to Phosphoserine. 2 positions are modified to phosphothreonine: threonine 1265 and threonine 1286. A phosphoserine mark is found at serine 1288, serine 1292, serine 1303, and serine 1306. The residue at position 1464 (tyrosine 1464) is a Phosphotyrosine. Residue threonine 1467 is modified to Phosphothreonine. A Phosphoserine modification is found at serine 1474. Phosphotyrosine is present on tyrosine 1492. Serine 1495 is modified (phosphoserine). Phosphothreonine is present on threonine 1501. Serine 1514 is modified (phosphoserine). Residue threonine 1517 is modified to Phosphothreonine. Serine 1554, serine 1574, serine 1600, serine 1603, serine 1714, and serine 1726 each carry phosphoserine. A phosphothreonine mark is found at threonine 1730 and threonine 1736. Phosphoserine is present on serine 1739.

Belongs to the TRAFAC class myosin-kinesin ATPase superfamily. Myosin family. Muscle myosin is a hexameric protein that consists of 2 heavy chain subunits (MHC), 2 alkali light chain subunits (MLC) and 2 regulatory light chain subunits (MLC-2). Interacts with SLC26A5.

The protein resides in the cytoplasm. Its subcellular location is the myofibril. Functionally, required for normal hearing. It plays a role in cochlear amplification of auditory stimuli, likely through the positive regulation of prestin (SLC26A5) activity and outer hair cell (OHC) electromotility. This chain is Myosin-1 (MYH1), found in Canis lupus familiaris (Dog).